A 459-amino-acid polypeptide reads, in one-letter code: Putrescine aminotransferase (459 aa).

Residues 150–151 and Gln274 each bind pyridoxal 5'-phosphate; that span reads GT. Lys300 carries the post-translational modification N6-(pyridoxal phosphate)lysine. Thr332 lines the pyridoxal 5'-phosphate pocket.

This sequence belongs to the class-III pyridoxal-phosphate-dependent aminotransferase family. Putrescine aminotransferase subfamily. Requires pyridoxal 5'-phosphate as cofactor.

The catalysed reaction is an alkane-alpha,omega-diamine + 2-oxoglutarate = an omega-aminoaldehyde + L-glutamate. It catalyses the reaction putrescine + 2-oxoglutarate = 1-pyrroline + L-glutamate + H2O. It carries out the reaction cadaverine + 2-oxoglutarate = 5-aminopentanal + L-glutamate. It functions in the pathway amine and polyamine degradation; putrescine degradation; 4-aminobutanal from putrescine (transaminase route): step 1/1. Functionally, catalyzes the aminotransferase reaction from putrescine to 2-oxoglutarate, leading to glutamate and 4-aminobutanal, which spontaneously cyclizes to form 1-pyrroline. This is the first step in one of two pathways for putrescine degradation, where putrescine is converted into 4-aminobutanoate (gamma-aminobutyrate or GABA) via 4-aminobutanal. Also functions as a cadaverine transaminase in a a L-lysine degradation pathway to succinate that proceeds via cadaverine, glutarate and L-2-hydroxyglutarate. The polypeptide is Putrescine aminotransferase (Escherichia coli O9:H4 (strain HS)).